The chain runs to 274 residues: NAD(P)H-quinone oxidoreductase subunit K, chloroplastic (274 aa).

Polar residues-rich tracts occupy residues 1-10 and 18-27; these read MVINQKNLSS and SGSQSSTKAD. Residues 1 to 27 form a disordered region; sequence MVINQKNLSSPVAPYDKSGSQSSTKAD. C90, C91, C155, and C186 together coordinate [4Fe-4S] cluster.

This sequence belongs to the complex I 20 kDa subunit family. As to quaternary structure, NDH is composed of at least 16 different subunits, 5 of which are encoded in the nucleus. [4Fe-4S] cluster serves as cofactor.

It is found in the plastid. The protein resides in the chloroplast thylakoid membrane. The catalysed reaction is a plastoquinone + NADH + (n+1) H(+)(in) = a plastoquinol + NAD(+) + n H(+)(out). The enzyme catalyses a plastoquinone + NADPH + (n+1) H(+)(in) = a plastoquinol + NADP(+) + n H(+)(out). In terms of biological role, NDH shuttles electrons from NAD(P)H:plastoquinone, via FMN and iron-sulfur (Fe-S) centers, to quinones in the photosynthetic chain and possibly in a chloroplast respiratory chain. The immediate electron acceptor for the enzyme in this species is believed to be plastoquinone. Couples the redox reaction to proton translocation, and thus conserves the redox energy in a proton gradient. The sequence is that of NAD(P)H-quinone oxidoreductase subunit K, chloroplastic from Chlorokybus atmophyticus (Soil alga).